The following is a 199-amino-acid chain: Cutinase CUT1 (199 aa).

The N-terminal stretch at 1–18 is a signal peptide; that stretch reads MKFTTLATLALGAVSALA. A propeptide spanning residues 19 to 27 is cleaved from the precursor; it reads APVTELESR. Residue Gln28 is modified to Pyrrolidone carboxylic acid. Cys31 and Cys105 form a disulfide bridge. Catalysis depends on Ser116, which acts as the Nucleophile. Cys164 and Cys171 are disulfide-bonded. Residue Asp168 is part of the active site. Catalysis depends on His181, which acts as the Proton donor/acceptor.

This sequence belongs to the cutinase family. Post-translationally, the 2 disulfide bonds play a critical role in holding the catalytic residues in juxta-position; reduction of the disulfide bridges results in the complete inactivation of the enzyme.

The enzyme catalyses cutin + H2O = cutin monomers.. In terms of biological role, catalyzes the hydrolysis of complex carboxylic polyesters found in the cell wall of plants. Degrades cutin, a macromolecule that forms the structure of the plant cuticle. Also degrades suberin, a specialized macromolecule found in the cell wall of various plant tissues. The sequence is that of Cutinase CUT1 from Coprinopsis cinerea (Inky cap fungus).